A 185-amino-acid chain; its full sequence is Bcl-2-modifying factor (185 aa).

Positions 1 to 28 (MEPPQCVEELEDDVFQPEDGEPGTQPGS) are disordered. Residues 8–21 (EELEDDVFQPEDGE) are compositionally biased toward acidic residues. The segment at 67–75 (DKATQTLSP) is interaction with DLC2. The short motif at 134–148 (IARKLQCIADQFHRL) is the BH3 element.

This sequence belongs to the Bcl-2 family. In terms of assembly, interacts with MCL1, BCL2, BCL2L1/BCL-Xl, BCL2A1 and BCL2L2/BCL-w. Interacts with the myosin V actin motor complex through its binding to DLC2.

In terms of biological role, may play a role in apoptosis. The polypeptide is Bcl-2-modifying factor (Bmf) (Rattus norvegicus (Rat)).